Reading from the N-terminus, the 173-residue chain is 3-hydroxydecanoyl-[acyl-carrier-protein] dehydratase (173 aa).

Residue histidine 71 is part of the active site.

This sequence belongs to the thioester dehydratase family. FabA subfamily. In terms of assembly, homodimer.

Its subcellular location is the cytoplasm. It catalyses the reaction a (3R)-hydroxyacyl-[ACP] = a (2E)-enoyl-[ACP] + H2O. The enzyme catalyses (3R)-hydroxydecanoyl-[ACP] = (2E)-decenoyl-[ACP] + H2O. It carries out the reaction (2E)-decenoyl-[ACP] = (3Z)-decenoyl-[ACP]. It functions in the pathway lipid metabolism; fatty acid biosynthesis. Functionally, necessary for the introduction of cis unsaturation into fatty acids. Catalyzes the dehydration of (3R)-3-hydroxydecanoyl-ACP to E-(2)-decenoyl-ACP and then its isomerization to Z-(3)-decenoyl-ACP. Can catalyze the dehydratase reaction for beta-hydroxyacyl-ACPs with saturated chain lengths up to 16:0, being most active on intermediate chain length. The sequence is that of 3-hydroxydecanoyl-[acyl-carrier-protein] dehydratase from Bradyrhizobium sp. (strain ORS 278).